A 130-amino-acid chain; its full sequence is Small ribosomal subunit protein uS9 (130 aa).

This sequence belongs to the universal ribosomal protein uS9 family.

The sequence is that of Small ribosomal subunit protein uS9 from Serratia proteamaculans (strain 568).